A 466-amino-acid chain; its full sequence is 3-isopropylmalate dehydratase large subunit (466 aa).

Positions 347, 407, and 410 each coordinate [4Fe-4S] cluster.

This sequence belongs to the aconitase/IPM isomerase family. LeuC type 1 subfamily. Heterodimer of LeuC and LeuD. [4Fe-4S] cluster serves as cofactor.

It carries out the reaction (2R,3S)-3-isopropylmalate = (2S)-2-isopropylmalate. The protein operates within amino-acid biosynthesis; L-leucine biosynthesis; L-leucine from 3-methyl-2-oxobutanoate: step 2/4. Catalyzes the isomerization between 2-isopropylmalate and 3-isopropylmalate, via the formation of 2-isopropylmaleate. In Buchnera aphidicola subsp. Diuraphis noxia, this protein is 3-isopropylmalate dehydratase large subunit.